Reading from the N-terminus, the 330-residue chain is Peroxidase N1 (330 aa).

Residues 1-29 (MEYYHHSINKMAMFMVILVLAIDVTMVLG) form the signal peptide. At Q30 the chain carries Pyrrolidone carboxylic acid. Disulfide bonds link C41–C117, C74–C79, C123–C326, and C201–C233. The active-site Proton acceptor is the H72. Ca(2+) is bound by residues D73, V76, G78, D80, and S82. P164 lines the substrate pocket. H194 lines the heme b pocket. A Ca(2+)-binding site is contributed by T195. An N-linked (GlcNAc...) asparagine glycan is attached at N212. D246 and D254 together coordinate Ca(2+).

It belongs to the peroxidase family. Classical plant (class III) peroxidase subfamily. The cofactor is Ca(2+). Requires heme b as cofactor. As to expression, expressed at a high level in roots and at a trace level in lower leaves. Not expressed in upper leaves, stems, flowers, seeds and shoot apices.

The protein resides in the secreted. The catalysed reaction is 2 a phenolic donor + H2O2 = 2 a phenolic radical donor + 2 H2O. Functionally, removal of H(2)O(2), oxidation of toxic reductants, biosynthesis and degradation of lignin, suberization, auxin catabolism, response to environmental stresses such as wounding, pathogen attack and oxidative stress. These functions might be dependent on each isozyme/isoform in each plant tissue. Can use NADH, NADPH and monolignols as substrates. This is Peroxidase N1 from Nicotiana tabacum (Common tobacco).